The sequence spans 589 residues: Multidrug transporter FLR2 (589 aa).

Residues 50–116 are disordered; that stretch reads KEEMKQDNQT…SSTKDASKPE (67 aa). The span at 56–73 shows a compositional bias: low complexity; it reads DNQTSTDSMSTSTQQETD. The N-linked (GlcNAc...) asparagine glycan is linked to N57. The span at 107 to 116 shows a compositional bias: basic and acidic residues; that stretch reads SSTKDASKPE. N-linked (GlcNAc...) asparagine glycosylation occurs at N136. Transmembrane regions (helical) follow at residues 143–163, 179–199, 211–231, 234–254, 275–295, 301–321, 378–398, 417–437, 455–475, 480–500, 516–536, and 551–571; these read TFVIVQLMVLTCINYMGSSIY, VVGTLNLSMYVLGYAIGPIIF, MPLYLWTFILFTILQVACALV, IAGLVILRFITGILCSPVLAT, WAVGAVAAPVMAPILGAAMVV, WIFWLMLFMCGATLLSIIFFF, PIILAFDVYIALCYGAFYLFF, GLAFLGFCVGCVFAYTALIIF, LFLILAMCLGWCLPFSLFFFG, IHWILPIIAELFFVLSVFNLF, ASVFAGNGLCRGAFAAAFPLF, and VAWGSTLIGFITVVLSLIPFV.

This sequence belongs to the major facilitator superfamily.

Its subcellular location is the cell membrane. Multidrug transporter that confers resistance to 5-flucytosine (5-FC) and clotrimazole. Further confers azole drug resistance. Plays direct roles in extrusion of 5-flucytosine and clotrimazole. This is Multidrug transporter FLR2 from Candida glabrata (strain ATCC 2001 / BCRC 20586 / JCM 3761 / NBRC 0622 / NRRL Y-65 / CBS 138) (Yeast).